Reading from the N-terminus, the 210-residue chain is MKKYSGLLGIISAPSGAGKSTLINALQKNDSILQIKLSISYTTRKKRPGEVHGKDYYFISIEEFQNMINQNMFLEYAKVFNHYYGTEKNSIKLMLNSGVHVILNIDWQGMNQIRNKKLDFYTIFILPPSQKELEKRLRFRGLDTDQVIFDRMKQAMNEISHCKEYDYIIINDDFNIALIYLQSVILSKQLKIDYQEYHNSNLINNLLSCL.

The Guanylate kinase-like domain maps to 6–186; the sequence is GLLGIISAPS…ALIYLQSVIL (181 aa). Residue 13 to 20 participates in ATP binding; that stretch reads APSGAGKS.

This sequence belongs to the guanylate kinase family.

It is found in the cytoplasm. The enzyme catalyses GMP + ATP = GDP + ADP. Its function is as follows. Essential for recycling GMP and indirectly, cGMP. This Blochmanniella floridana protein is Guanylate kinase.